We begin with the raw amino-acid sequence, 168 residues long: Skp-like protein (168 aa).

The N-terminal stretch at 1 to 22 (MRKFTQFVLITAAIMAAPSAFA) is a signal peptide.

Belongs to the Skp family.

The chain is Skp-like protein from Pseudomonas aeruginosa (strain ATCC 15692 / DSM 22644 / CIP 104116 / JCM 14847 / LMG 12228 / 1C / PRS 101 / PAO1).